A 608-amino-acid chain; its full sequence is Nuclear protein localization protein 4 homolog (608 aa).

Residue alanine 2 is modified to N-acetylalanine. At lysine 179 the chain carries N6-acetyllysine. Positions 226–363 (IMFENHTVAD…ICRLSPDGHF (138 aa)) constitute an MPN domain. A RanBP2-type zinc finger spans residues 580–608 (TSAMWACQHCTFMNQPGTGHCEMCSLPRT).

The protein belongs to the NPL4 family. As to quaternary structure, heterodimer with UFD1. The heterodimer binds ubiquitinated proteins. The heterodimer binds to VCP and inhibits Golgi membrane fusion. Interacts with ZFAND2B; probably through VCP.

It is found in the cytoplasm. The protein resides in the cytosol. It localises to the endoplasmic reticulum. Its subcellular location is the nucleus. It participates in protein degradation; proteasomal ubiquitin-dependent pathway. The ternary complex containing UFD1, VCP and NPLOC4 binds ubiquitinated proteins and is necessary for the export of misfolded proteins from the ER to the cytoplasm, where they are degraded by the proteasome. The NPLOC4-UFD1-VCP complex regulates spindle disassembly at the end of mitosis and is necessary for the formation of a closed nuclear envelope. Acts as a negative regulator of type I interferon production via the complex formed with VCP and UFD1, which binds to RIGI and recruits RNF125 to promote ubiquitination and degradation of RIGI. The chain is Nuclear protein localization protein 4 homolog (Nploc4) from Rattus norvegicus (Rat).